We begin with the raw amino-acid sequence, 205 residues long: Potassium-transporting ATPase KdpC subunit (205 aa).

The chain crosses the membrane as a helical span at residues 7–27 (PAIVILVALTIITGLIYPLAM).

Belongs to the KdpC family. As to quaternary structure, the system is composed of three essential subunits: KdpA, KdpB and KdpC.

It localises to the cell inner membrane. Part of the high-affinity ATP-driven potassium transport (or Kdp) system, which catalyzes the hydrolysis of ATP coupled with the electrogenic transport of potassium into the cytoplasm. This subunit acts as a catalytic chaperone that increases the ATP-binding affinity of the ATP-hydrolyzing subunit KdpB by the formation of a transient KdpB/KdpC/ATP ternary complex. This chain is Potassium-transporting ATPase KdpC subunit, found in Nitrobacter hamburgensis (strain DSM 10229 / NCIMB 13809 / X14).